A 586-amino-acid polypeptide reads, in one-letter code: Acetylcholinesterase (586 aa).

A signal peptide spans 1–21; sequence MNLLVTSSLGVLLHLVVLCQA. N80 carries N-linked (GlcNAc...) asparagine glycosylation. A disulfide bridge links C88 with C115. S221 serves as the catalytic Acyl-ester intermediate. The cysteines at positions 275 and 286 are disulfide-linked. E348 serves as the catalytic Charge relay system. An intrachain disulfide couples C423 to C542. N-linked (GlcNAc...) asparagine glycosylation occurs at N437. H461 (charge relay system) is an active-site residue. 2 N-linked (GlcNAc...) asparagine glycosylation sites follow: N478 and N554. S564 is lipidated: GPI-anchor amidated serine. The propeptide at 565-586 is removed in mature form; that stretch reads SGTSSSKGIIFYVLFSILYLIF.

This sequence belongs to the type-B carboxylesterase/lipase family. Isoform H form is a homodimer; the asymmetric form is a disulfide-bonded oligomer composed of a collagenic subunit (Q) and a variable number of T catalytic subunits. In terms of processing, an interchain disulfide bond is present in what becomes position 593 of the T isoform. In terms of tissue distribution, found in the synapses and to a lower extent in extrajunctional areas of muscle and nerve, and on erythrocyte membranes.

Its subcellular location is the cell membrane. The protein resides in the synapse. The catalysed reaction is acetylcholine + H2O = choline + acetate + H(+). With respect to regulation, inhibited by substrate concentrations above 0.5 mM. Its function is as follows. Terminates signal transduction at the neuromuscular junction by rapid hydrolysis of the acetylcholine released into the synaptic cleft. May be involved in cell-cell interactions. The protein is Acetylcholinesterase (ache) of Tetronarce californica (Pacific electric ray).